Here is a 210-residue protein sequence, read N- to C-terminus: MAVSYHFRPGERINEVELAAQLKVSRTPLREALNRLTTEGFLTTTANKGFFARVLEANTLFDLYELRAFLEQSAVRLACQRATDQEIAVLRDFLLEQDESGEISAGEMLKLDEEFHFRLVGLSQNEELLKTVRSISERIRFARWIDWQSRRLSHEQHLHITSLLADRKEDECAAFVLAHIQKHFDQILEIIRGAVTEIYTRNSDSPRKAR.

Residues 1–55 (MAVSYHFRPGERINEVELAAQLKVSRTPLREALNRLTTEGFLTTTANKGFFARVL) enclose the HTH gntR-type domain. The segment at residues 15 to 34 (EVELAAQLKVSRTPLREALN) is a DNA-binding region (H-T-H motif).

Probable regulator for the expression of the NTA monooxygenase subunits. The chain is Nta operon transcriptional regulator (ntaR) from Aminobacter aminovorans (Chelatobacter heintzii).